Reading from the N-terminus, the 402-residue chain is S-adenosylmethionine synthase (402 aa).

H16 lines the ATP pocket. D18 provides a ligand contact to Mg(2+). A K(+)-binding site is contributed by E44. The L-methionine site is built by E57 and Q103. Residues 103–113 are flexible loop; sequence QSPDIAQGVDT. ATP-binding positions include 178-180, 249-250, D258, 264-265, A281, and K285; these read DGK, KF, and RK. D258 contributes to the L-methionine binding site. K289 provides a ligand contact to L-methionine.

Belongs to the AdoMet synthase family. As to quaternary structure, homotetramer; dimer of dimers. Requires Mg(2+) as cofactor. The cofactor is K(+).

The protein localises to the cytoplasm. It catalyses the reaction L-methionine + ATP + H2O = S-adenosyl-L-methionine + phosphate + diphosphate. The protein operates within amino-acid biosynthesis; S-adenosyl-L-methionine biosynthesis; S-adenosyl-L-methionine from L-methionine: step 1/1. Catalyzes the formation of S-adenosylmethionine (AdoMet) from methionine and ATP. The overall synthetic reaction is composed of two sequential steps, AdoMet formation and the subsequent tripolyphosphate hydrolysis which occurs prior to release of AdoMet from the enzyme. The polypeptide is S-adenosylmethionine synthase (Mycolicibacterium gilvum (strain PYR-GCK) (Mycobacterium gilvum (strain PYR-GCK))).